A 621-amino-acid chain; its full sequence is Phosphoenolpyruvate carboxykinase [GTP] (621 aa).

Substrate is bound by residues Arg82 and 220-222; that span reads YGG. Mn(2+)-binding residues include Lys229 and His249. Residue Ser271 participates in substrate binding. Position 272–277 (272–277) interacts with GTP; the sequence is QCGKTN. Cys273 is an active-site residue. Asp296 provides a ligand contact to Mn(2+). 386–388 provides a ligand contact to substrate; it reads NSR. GTP contacts are provided by residues Arg388, Arg419, and 514–517; that span reads FGEN.

Belongs to the phosphoenolpyruvate carboxykinase [GTP] family. As to quaternary structure, monomer. The cofactor is Mn(2+).

Its subcellular location is the cytoplasm. It carries out the reaction oxaloacetate + GTP = phosphoenolpyruvate + GDP + CO2. The protein operates within carbohydrate biosynthesis; gluconeogenesis. Catalyzes the conversion of oxaloacetate (OAA) to phosphoenolpyruvate (PEP), the rate-limiting step in the metabolic pathway that produces glucose from lactate and other precursors derived from the citric acid cycle. This chain is Phosphoenolpyruvate carboxykinase [GTP], found in Corynebacterium kroppenstedtii (strain DSM 44385 / JCM 11950 / CIP 105744 / CCUG 35717).